We begin with the raw amino-acid sequence, 359 residues long: Histamine H2 receptor (359 aa).

The Extracellular portion of the chain corresponds to 1–22 (MISNGTGSSFCLDSPPCRITVS). Asparagine 4 carries N-linked (GlcNAc...) asparagine glycosylation. The chain crosses the membrane as a helical span at residues 23–44 (VVLTVLILITIAGNVVVCLAVG). The Cytoplasmic portion of the chain corresponds to 45-57 (LNRRLRSLTNCFI). A helical transmembrane segment spans residues 58–81 (VSLAITDLLLGLLVLPFSAFYQLS). The Extracellular portion of the chain corresponds to 82-92 (CRWSFGKVFCN). Cysteine 91 and cysteine 174 are disulfide-bonded. Residues 93–114 (IYTSLDVMLCTASILNLFMISL) traverse the membrane as a helical segment. The Cytoplasmic portion of the chain corresponds to 115-134 (DRYCAVTDPLRYPVLITPVR). Residues 135 to 159 (VAVSLVLIWVISITLSFLSIHLGWN) traverse the membrane as a helical segment. The Extracellular portion of the chain corresponds to 160–180 (SRNETSSFNHTIPKCKVQVNL). The helical transmembrane segment at 181-204 (VYGLVDGLVTFYLPLLVMCITYYR) threads the bilayer. At 205–234 (IFKIARDQAKRIHHMGSWKAATIGEHKATV) the chain is on the cytoplasmic side. A helical membrane pass occupies residues 235 to 258 (TLAAVMGAFIICWFPYFTVFVYRG). Residues 259-267 (LKGDDAINE) are Extracellular-facing. A helical transmembrane segment spans residues 268 to 289 (AFEAVVLWLGYANSALNPILYA). Topologically, residues 290 to 359 (TLNRDFRTAY…VTAPRGATDR (70 aa)) are cytoplasmic. Cysteine 305 carries S-palmitoyl cysteine lipidation. Residues 310 to 327 (HNAQETSLRSNSSQLARN) are compositionally biased toward polar residues. The tract at residues 310–359 (HNAQETSLRSNSSQLARNQSREPMRQEEKPLKLQVWSGTEVTAPRGATDR) is disordered. The span at 328–340 (QSREPMRQEEKPL) shows a compositional bias: basic and acidic residues.

Belongs to the G-protein coupled receptor 1 family. In terms of tissue distribution, gastric fundus and, to a lesser extent, in brain.

The protein localises to the cell membrane. Its function is as follows. The H2 subclass of histamine receptors mediates gastric acid secretion. The activity of this receptor is mediated by G proteins which activate adenylyl cyclase. This is Histamine H2 receptor (HRH2) from Canis lupus familiaris (Dog).